The following is a 112-amino-acid chain: T cell receptor alpha variable 9-1 (112 aa).

A signal peptide spans methionine 1–glycine 20. The 92-residue stretch at aspartate 21–serine 112 folds into the Ig-like domain. An N-linked (GlcNAc...) asparagine glycan is attached at asparagine 41. Cysteine 42 and cysteine 109 form a disulfide bridge.

In terms of assembly, alpha-beta TR is a heterodimer composed of an alpha and beta chain; disulfide-linked. The alpha-beta TR is associated with the transmembrane signaling CD3 coreceptor proteins to form the TR-CD3 (TcR or TCR). The assembly of alpha-beta TR heterodimers with CD3 occurs in the endoplasmic reticulum where a single alpha-beta TR heterodimer associates with one CD3D-CD3E heterodimer, one CD3G-CD3E heterodimer and one CD247 homodimer forming a stable octameric structure. CD3D-CD3E and CD3G-CD3E heterodimers preferentially associate with TR alpha and TR beta chains, respectively. The association of the CD247 homodimer is the last step of TcR assembly in the endoplasmic reticulum and is required for transport to the cell surface.

It localises to the cell membrane. Functionally, v region of the variable domain of T cell receptor (TR) alpha chain that participates in the antigen recognition. Alpha-beta T cell receptors are antigen specific receptors which are essential to the immune response and are present on the cell surface of T lymphocytes. Recognize peptide-major histocompatibility (MH) (pMH) complexes that are displayed by antigen presenting cells (APC), a prerequisite for efficient T cell adaptive immunity against pathogens. Binding of alpha-beta TR to pMH complex initiates TR-CD3 clustering on the cell surface and intracellular activation of LCK that phosphorylates the ITAM motifs of CD3G, CD3D, CD3E and CD247 enabling the recruitment of ZAP70. In turn ZAP70 phosphorylates LAT, which recruits numerous signaling molecules to form the LAT signalosome. The LAT signalosome propagates signal branching to three major signaling pathways, the calcium, the mitogen-activated protein kinase (MAPK) kinase and the nuclear factor NF-kappa-B (NF-kB) pathways, leading to the mobilization of transcription factors that are critical for gene expression and essential for T cell growth and differentiation. The T cell repertoire is generated in the thymus, by V-(D)-J rearrangement. This repertoire is then shaped by intrathymic selection events to generate a peripheral T cell pool of self-MH restricted, non-autoaggressive T cells. Post-thymic interaction of alpha-beta TR with the pMH complexes shapes TR structural and functional avidity. This chain is T cell receptor alpha variable 9-1, found in Homo sapiens (Human).